The sequence spans 369 residues: UDP-N-acetylglucosamine--N-acetylmuramyl-(pentapeptide) pyrophosphoryl-undecaprenol N-acetylglucosamine transferase (369 aa).

Residues Thr-10 to Gly-12, Asn-124, Arg-161, Ser-195, and Gln-295 each bind UDP-N-acetyl-alpha-D-glucosamine.

Belongs to the glycosyltransferase 28 family. MurG subfamily.

It localises to the cell membrane. The catalysed reaction is di-trans,octa-cis-undecaprenyl diphospho-N-acetyl-alpha-D-muramoyl-L-alanyl-D-glutamyl-meso-2,6-diaminopimeloyl-D-alanyl-D-alanine + UDP-N-acetyl-alpha-D-glucosamine = di-trans,octa-cis-undecaprenyl diphospho-[N-acetyl-alpha-D-glucosaminyl-(1-&gt;4)]-N-acetyl-alpha-D-muramoyl-L-alanyl-D-glutamyl-meso-2,6-diaminopimeloyl-D-alanyl-D-alanine + UDP + H(+). It functions in the pathway cell wall biogenesis; peptidoglycan biosynthesis. Its function is as follows. Cell wall formation. Catalyzes the transfer of a GlcNAc subunit on undecaprenyl-pyrophosphoryl-MurNAc-pentapeptide (lipid intermediate I) to form undecaprenyl-pyrophosphoryl-MurNAc-(pentapeptide)GlcNAc (lipid intermediate II). The polypeptide is UDP-N-acetylglucosamine--N-acetylmuramyl-(pentapeptide) pyrophosphoryl-undecaprenol N-acetylglucosamine transferase (Acidothermus cellulolyticus (strain ATCC 43068 / DSM 8971 / 11B)).